Consider the following 301-residue polypeptide: MDIRDKILKLKKEKGAIILAHYYQIPEIQEIADYVGDSYYLSKIAKDCEENIIVFCGVKFMAESAKILSPEKTVILPVMEAGCVMADMATEEGLAKLKEEHPNAKVVCYINSSTEVKALSDVCCTSSNAENIINNLEEKEIIFLPDRNLGSYIQEKTPDKKFILWNGFCIVHEAIQKEEILRLKREHEGILTVAHPECSKEIRDISDFIGSTSEIINFVNNSSNKKFIIITEEGVLHQLRKNGEEKEFYIPYGKMVCRNMKMTTLKDLYESLLKMENKIEIDEDLRLKAYNSLKNMHKLGG.

Iminosuccinate is bound by residues His-21 and Ser-38. Cys-83 serves as a coordination point for [4Fe-4S] cluster. Iminosuccinate contacts are provided by residues 109–111 (YIN) and Ser-126. A [4Fe-4S] cluster-binding site is contributed by Cys-169. Residues 195–197 (HPE) and Thr-212 contribute to the iminosuccinate site. Cys-257 lines the [4Fe-4S] cluster pocket.

The protein belongs to the quinolinate synthase family. Type 2 subfamily. [4Fe-4S] cluster serves as cofactor.

It localises to the cytoplasm. The enzyme catalyses iminosuccinate + dihydroxyacetone phosphate = quinolinate + phosphate + 2 H2O + H(+). It functions in the pathway cofactor biosynthesis; NAD(+) biosynthesis; quinolinate from iminoaspartate: step 1/1. In terms of biological role, catalyzes the condensation of iminoaspartate with dihydroxyacetone phosphate to form quinolinate. This Clostridium perfringens (strain SM101 / Type A) protein is Quinolinate synthase.